Reading from the N-terminus, the 396-residue chain is Purine ribonucleoside efflux pump NepI (396 aa).

At 1–21 (MSEFIAENRGANAITRPNWSA) the chain is on the cytoplasmic side. A helical transmembrane segment spans residues 22–42 (VFSVAFCVACLIIVEFLPVSL). Residues 43-54 (LTPMAQDLGISE) lie on the Periplasmic side of the membrane. Residues 55-75 (GVAGQSVTVTAFVAMFASLFI) traverse the membrane as a helical segment. Over 76–85 (TQTIQATDRR) the chain is Cytoplasmic. Residues 86-106 (YVVILFAVLLTLSCLLVSFAN) form a helical membrane-spanning segment. A topological domain (periplasmic) is located at residue S107. The chain crosses the membrane as a helical span at residues 108–128 (FSLLLIGRACLGLALGGFWAM). Topologically, residues 129-147 (SASLTMRLVPPRTVPKALS) are cytoplasmic. The chain crosses the membrane as a helical span at residues 148-168 (VIFGAVSIALVIAAPLGSFLG). Residues 169 to 175 (ELIGWRN) lie on the Periplasmic side of the membrane. Residues 176–196 (VFNAAAAMGVLCIFWIIKSLP) traverse the membrane as a helical segment. Residues 197–215 (SLPGEPSHQKQNTFRLLQR) lie on the Cytoplasmic side of the membrane. The helical transmembrane segment at 216-236 (PGVMAGMIAIFMSFAGQFAFF) threads the bilayer. Residues 237–255 (TYIRPVYMNLAGFGVDGLT) lie on the Periplasmic side of the membrane. A helical transmembrane segment spans residues 256–276 (LVLLSFGIASFVGTSLSSFIL). Residues 277–281 (KRSVK) are Cytoplasmic-facing. A helical membrane pass occupies residues 282–302 (LALAGAPFVLALSALVLTLWG). Residues 303 to 305 (SYK) lie on the Periplasmic side of the membrane. A helical membrane pass occupies residues 306–326 (IVATGVAIIWGLTFALIPVGW). Topologically, residues 327 to 343 (STWITRSLADQAEKAGS) are cytoplasmic. The helical transmembrane segment at 344–364 (IQVAVIQLANTCGAAIGGYAL) threads the bilayer. Over 365–366 (DN) the chain is Periplasmic. The chain crosses the membrane as a helical span at residues 367–387 (IGLTSPLMLSGTLMLLTALLV). The Cytoplasmic segment spans residues 388–396 (TAKVKMKKS).

Belongs to the major facilitator superfamily. DHA1 family. NepI (TC 2.A.1.2.26) subfamily.

The protein localises to the cell inner membrane. The catalysed reaction is inosine(in) + H(+)(out) = inosine(out) + H(+)(in). The enzyme catalyses guanosine(in) + H(+)(out) = guanosine(out) + H(+)(in). In terms of biological role, involved in the efflux of purine ribonucleosides, such as inosine and guanosine. The chain is Purine ribonucleoside efflux pump NepI from Escherichia coli O6:H1 (strain CFT073 / ATCC 700928 / UPEC).